The primary structure comprises 804 residues: Leucine--tRNA ligase (804 aa).

The 'HIGH' region signature appears at 40–51 (PYPSGAGLHVGH). The 'KMSKS' region signature appears at 576 to 580 (KMSKS). K579 is an ATP binding site.

It belongs to the class-I aminoacyl-tRNA synthetase family.

The protein resides in the cytoplasm. The enzyme catalyses tRNA(Leu) + L-leucine + ATP = L-leucyl-tRNA(Leu) + AMP + diphosphate. This is Leucine--tRNA ligase from Staphylococcus aureus (strain bovine RF122 / ET3-1).